Consider the following 359-residue polypeptide: N-acetyl-gamma-glutamyl-phosphate reductase (359 aa).

The active site involves C162.

Belongs to the NAGSA dehydrogenase family. Type 1 subfamily.

The protein resides in the cytoplasm. The catalysed reaction is N-acetyl-L-glutamate 5-semialdehyde + phosphate + NADP(+) = N-acetyl-L-glutamyl 5-phosphate + NADPH + H(+). The protein operates within amino-acid biosynthesis; L-arginine biosynthesis; N(2)-acetyl-L-ornithine from L-glutamate: step 3/4. In terms of biological role, catalyzes the NADPH-dependent reduction of N-acetyl-5-glutamyl phosphate to yield N-acetyl-L-glutamate 5-semialdehyde. The chain is N-acetyl-gamma-glutamyl-phosphate reductase from Prochlorococcus marinus (strain NATL2A).